The chain runs to 350 residues: Phosphoribosylformylglycinamidine cyclo-ligase (350 aa).

It belongs to the AIR synthase family.

It is found in the cytoplasm. The enzyme catalyses 2-formamido-N(1)-(5-O-phospho-beta-D-ribosyl)acetamidine + ATP = 5-amino-1-(5-phospho-beta-D-ribosyl)imidazole + ADP + phosphate + H(+). It functions in the pathway purine metabolism; IMP biosynthesis via de novo pathway; 5-amino-1-(5-phospho-D-ribosyl)imidazole from N(2)-formyl-N(1)-(5-phospho-D-ribosyl)glycinamide: step 2/2. In Pseudoalteromonas translucida (strain TAC 125), this protein is Phosphoribosylformylglycinamidine cyclo-ligase.